The primary structure comprises 629 residues: tRNA uridine 5-carboxymethylaminomethyl modification enzyme MnmG (629 aa).

14–19 (GAGHAG) lines the FAD pocket. Position 274 to 288 (274 to 288 (GPRYCPSIEDKVVRF)) interacts with NAD(+).

It belongs to the MnmG family. As to quaternary structure, homodimer. Heterotetramer of two MnmE and two MnmG subunits. FAD serves as cofactor.

It localises to the cytoplasm. In terms of biological role, NAD-binding protein involved in the addition of a carboxymethylaminomethyl (cmnm) group at the wobble position (U34) of certain tRNAs, forming tRNA-cmnm(5)s(2)U34. This chain is tRNA uridine 5-carboxymethylaminomethyl modification enzyme MnmG, found in Xylella fastidiosa (strain 9a5c).